The following is a 109-amino-acid chain: U26-theraphotoxin-Cg1b (109 aa).

The N-terminal stretch at Met-1–Ala-18 is a signal peptide. The propeptide occupies Tyr-19–Arg-67. 3 disulfide bridges follow: Cys-68/Cys-83, Cys-75/Cys-88, and Cys-82/Cys-103.

It belongs to the neurotoxin 14 (magi-1) family. 07 (Jztx-56) subfamily. In terms of tissue distribution, expressed by the venom gland.

It is found in the secreted. Functionally, probable ion channel inhibitor. This is U26-theraphotoxin-Cg1b from Chilobrachys guangxiensis (Chinese earth tiger tarantula).